Consider the following 1214-residue polypeptide: Receptor-type guanylate cyclase gcy-19 (1214 aa).

The N-terminal stretch at 1–18 (MEHLIFLLIFGGYSPSIA) is a signal peptide. Residues 19–517 (QITSSTTTTT…PQTFVDQYGA (499 aa)) are Extracellular-facing. N-linked (GlcNAc...) asparagine glycans are attached at residues N85, N363, N441, and N464. The chain crosses the membrane as a helical span at residues 518-538 (LVFSIGGVLALAMLFLITCFF). Residues 539–1214 (YVLRQRKLER…FRRQETLALM (676 aa)) are Cytoplasmic-facing. A Protein kinase domain is found at 572-859 (RMSKRSIQSG…KGNLMDHVFN (288 aa)). The Guanylate cyclase domain occupies 917–1047 (TVFFSDVVKF…DTVNTASRME (131 aa)). Residues 1116–1197 (NSSNMAYNPE…EKAREIHNEE (82 aa)) are disordered. Residues 1133 to 1142 (DDEDVDDESS) are compositionally biased toward acidic residues. A compositionally biased stretch (basic and acidic residues) spans 1186-1197 (LEEKAREIHNEE).

Belongs to the adenylyl cyclase class-4/guanylyl cyclase family. As to expression, expressed asymmetrically in ASE right (ASER) sensory neuron.

It is found in the cell membrane. The enzyme catalyses GTP = 3',5'-cyclic GMP + diphosphate. In terms of biological role, guanylate cyclase involved in the production of the second messenger cGMP. The sequence is that of Receptor-type guanylate cyclase gcy-19 from Caenorhabditis briggsae.